Here is a 224-residue protein sequence, read N- to C-terminus: MIKKFFITGTDTNVGKTIVSSILLKKATMSGYQTAGYKPVSSGGQKKSSGFFNQDAILLKKSSSIILSDREVNPIAFFENAPPHILSKFQKRSIKKEELSLGLSNITKKSNWILVEGAGGWYTPLSCKDTFSSWVKQEKLTVIIIIAIKLGCINHAILTEKAIISDQIKCGGWIANNIFPKDKYNMHYIQTLLNYIKSPFLGVVPYFKNKNRINFKKIKIKLPK.

13-18 (NVGKTI) serves as a coordination point for ATP. T17 is a binding site for Mg(2+). K38 is a catalytic residue. Position 42 (S42) interacts with substrate. Residues D55, 116–119 (EGAG), 176–177 (NN), and N211 each bind ATP. Positions 55 and 116 each coordinate Mg(2+).

It belongs to the dethiobiotin synthetase family. Homodimer. Mg(2+) is required as a cofactor.

It localises to the cytoplasm. The catalysed reaction is (7R,8S)-7,8-diammoniononanoate + CO2 + ATP = (4R,5S)-dethiobiotin + ADP + phosphate + 3 H(+). The protein operates within cofactor biosynthesis; biotin biosynthesis; biotin from 7,8-diaminononanoate: step 1/2. Catalyzes a mechanistically unusual reaction, the ATP-dependent insertion of CO2 between the N7 and N8 nitrogen atoms of 7,8-diaminopelargonic acid (DAPA, also called 7,8-diammoniononanoate) to form a ureido ring. This chain is ATP-dependent dethiobiotin synthetase BioD, found in Buchnera aphidicola subsp. Acyrthosiphon pisum (strain 5A).